The sequence spans 314 residues: Aspartate carbamoyltransferase catalytic subunit (314 aa).

Residues arginine 64 and threonine 65 each contribute to the carbamoyl phosphate site. Lysine 92 serves as a coordination point for L-aspartate. Residues arginine 114, histidine 142, and glutamine 145 each contribute to the carbamoyl phosphate site. Positions 175 and 230 each coordinate L-aspartate. Carbamoyl phosphate-binding residues include glycine 271 and proline 272.

It belongs to the aspartate/ornithine carbamoyltransferase superfamily. ATCase family. Heterododecamer (2C3:3R2) of six catalytic PyrB chains organized as two trimers (C3), and six regulatory PyrI chains organized as three dimers (R2).

The catalysed reaction is carbamoyl phosphate + L-aspartate = N-carbamoyl-L-aspartate + phosphate + H(+). The protein operates within pyrimidine metabolism; UMP biosynthesis via de novo pathway; (S)-dihydroorotate from bicarbonate: step 2/3. Functionally, catalyzes the condensation of carbamoyl phosphate and aspartate to form carbamoyl aspartate and inorganic phosphate, the committed step in the de novo pyrimidine nucleotide biosynthesis pathway. The chain is Aspartate carbamoyltransferase catalytic subunit from Deinococcus radiodurans (strain ATCC 13939 / DSM 20539 / JCM 16871 / CCUG 27074 / LMG 4051 / NBRC 15346 / NCIMB 9279 / VKM B-1422 / R1).